The chain runs to 56 residues: UPF0391 membrane protein Jann_3570 (56 aa).

The next 2 membrane-spanning stretches (helical) occupy residues 4-24 (WAVTFLIIALIAALFGFGGIA) and 29-48 (GIAQILFFVFIALFAISLVA).

Belongs to the UPF0391 family.

The protein localises to the cell membrane. The protein is UPF0391 membrane protein Jann_3570 of Jannaschia sp. (strain CCS1).